A 485-amino-acid chain; its full sequence is N-succinylglutamate 5-semialdehyde dehydrogenase (485 aa).

220 to 225 lines the NAD(+) pocket; it reads GSANTG. Catalysis depends on residues Glu243 and Cys278.

This sequence belongs to the aldehyde dehydrogenase family. AstD subfamily.

The catalysed reaction is N-succinyl-L-glutamate 5-semialdehyde + NAD(+) + H2O = N-succinyl-L-glutamate + NADH + 2 H(+). Its pathway is amino-acid degradation; L-arginine degradation via AST pathway; L-glutamate and succinate from L-arginine: step 4/5. In terms of biological role, catalyzes the NAD-dependent reduction of succinylglutamate semialdehyde into succinylglutamate. The sequence is that of N-succinylglutamate 5-semialdehyde dehydrogenase from Vibrio cholerae serotype O1 (strain M66-2).